A 293-amino-acid polypeptide reads, in one-letter code: Cell division protein FtsQ (293 aa).

At Met1–Gln29 the chain is on the cytoplasmic side. Residues Leu30 to Gly52 traverse the membrane as a helical segment. The Periplasmic segment spans residues Gly53–Ala293. Residues Phe75 to Arg144 enclose the POTRA domain.

The protein belongs to the FtsQ/DivIB family. FtsQ subfamily.

It localises to the cell inner membrane. Essential cell division protein. The chain is Cell division protein FtsQ from Hirschia baltica (strain ATCC 49814 / DSM 5838 / IFAM 1418).